Consider the following 296-residue polypeptide: Glycine--tRNA ligase alpha subunit (296 aa).

Belongs to the class-II aminoacyl-tRNA synthetase family. Tetramer of two alpha and two beta subunits.

It is found in the cytoplasm. It catalyses the reaction tRNA(Gly) + glycine + ATP = glycyl-tRNA(Gly) + AMP + diphosphate. The chain is Glycine--tRNA ligase alpha subunit from Desulfitobacterium hafniense (strain Y51).